The following is a 283-amino-acid chain: Homeobox protein six1a (283 aa).

The segment at residues 124–183 (GEETSYCFKEKSRSVLREWYTHNPYPSPREKRELAEATGLTTTQVSNWFKNRRQRDRAAE) is a DNA-binding region (homeobox). The disordered stretch occupies residues 168 to 264 (VSNWFKNRRQ…PLHGMQGHPH (97 aa)). Residues 179-190 (DRAAEAKERENG) show a composition bias toward basic and acidic residues. A compositionally biased stretch (low complexity) spans 237–248 (MNNPAAPAYPMP).

Belongs to the SIX/Sine oculis homeobox family.

It localises to the nucleus. Its subcellular location is the cytoplasm. Its function is as follows. Transcription factor that is involved in the regulation of cell proliferation, apoptosis and embryonic development. Depending on context, functions as a transcriptional repressor or activator. Plays an important role in the development of the inner ear, where it promotes hair cell proliferation and inhibits proliferation of neural progenitor cells. Required for normal myogenesis. Plays a role in the development of fast muscle fibers throughout the body, as well as the development of craniofacial muscles. The protein is Homeobox protein six1a (six1a) of Danio rerio (Zebrafish).